Consider the following 556-residue polypeptide: Energy-dependent translational throttle protein EttA (556 aa).

ABC transporter domains lie at 7–260 (YTMH…EQEQ) and 325–551 (IEVQ…RIKY). Residue 40–47 (GLNGAGKS) coordinates ATP. An arm region spans residues 96–140 (SEVKNALTRLDEVYALYADPDADFDKLAAEQANLEAIIQAHDGHN). Positions 243-323 (GNYSSWLEQK…IPPGPRLGDK (81 aa)) are ptIM. 357 to 364 (GANGAGKS) contributes to the ATP binding site.

Belongs to the ABC transporter superfamily. ABCF family. Translational throttle EttA subfamily. Monomer. Probably contacts ribosomal proteins L1, L5, L33 and S7, the 16S and 23S rRNA and the P-site containing tRNA(fMet).

The protein resides in the cytoplasm. The enzyme catalyses ATP + H2O = ADP + phosphate + H(+). Functionally, a translation factor that gates the progression of the 70S ribosomal initiation complex (IC, containing tRNA(fMet) in the P-site) into the translation elongation cycle by using a mechanism sensitive to the ATP/ADP ratio. Binds to the 70S ribosome E-site where it modulates the state of the translating ribosome during subunit translocation. ATP hydrolysis probably frees it from the ribosome, which can enter the elongation phase. The sequence is that of Energy-dependent translational throttle protein EttA from Haemophilus influenzae (strain ATCC 51907 / DSM 11121 / KW20 / Rd).